Consider the following 274-residue polypeptide: Large ribosomal subunit protein uL2 (274 aa).

Positions 223-274 (VAMNPVDHPHGGGEGRTGEGRHAVDPWGNLTKGYRTRNNKRTQSMIVSRRKK) are disordered. Residues 229–246 (DHPHGGGEGRTGEGRHAV) show a composition bias toward basic and acidic residues.

This sequence belongs to the universal ribosomal protein uL2 family. Part of the 50S ribosomal subunit. Forms a bridge to the 30S subunit in the 70S ribosome.

In terms of biological role, one of the primary rRNA binding proteins. Required for association of the 30S and 50S subunits to form the 70S ribosome, for tRNA binding and peptide bond formation. It has been suggested to have peptidyltransferase activity; this is somewhat controversial. Makes several contacts with the 16S rRNA in the 70S ribosome. This chain is Large ribosomal subunit protein uL2, found in Verminephrobacter eiseniae (strain EF01-2).